The primary structure comprises 776 residues: Protein translocase subunit SecA 2 (776 aa).

ATP-binding positions include Gln-80, 98–102, and Asp-486; that span reads GEGKT.

It belongs to the SecA family. Monomer and homodimer. Part of the essential Sec protein translocation apparatus which comprises SecA, SecYEG and auxiliary proteins SecDF. Other proteins may also be involved.

Its subcellular location is the cell membrane. The protein localises to the cytoplasm. The catalysed reaction is ATP + H2O + cellular proteinSide 1 = ADP + phosphate + cellular proteinSide 2.. Part of the Sec protein translocase complex. Interacts with the SecYEG preprotein conducting channel. Has a central role in coupling the hydrolysis of ATP to the transfer of proteins into and across the cell membrane, serving as an ATP-driven molecular motor driving the stepwise translocation of polypeptide chains across the membrane. This chain is Protein translocase subunit SecA 2, found in Listeria welshimeri serovar 6b (strain ATCC 35897 / DSM 20650 / CCUG 15529 / CIP 8149 / NCTC 11857 / SLCC 5334 / V8).